A 118-amino-acid chain; its full sequence is Ribonuclease P protein component (118 aa).

The protein belongs to the RnpA family. Consists of a catalytic RNA component (M1 or rnpB) and a protein subunit.

The enzyme catalyses Endonucleolytic cleavage of RNA, removing 5'-extranucleotides from tRNA precursor.. RNaseP catalyzes the removal of the 5'-leader sequence from pre-tRNA to produce the mature 5'-terminus. It can also cleave other RNA substrates such as 4.5S RNA. The protein component plays an auxiliary but essential role in vivo by binding to the 5'-leader sequence and broadening the substrate specificity of the ribozyme. The polypeptide is Ribonuclease P protein component (Rickettsia canadensis (strain McKiel)).